The primary structure comprises 390 residues: Adherens junction-associated protein 1 (390 aa).

Residues 1–37 (MWITQLLGIRSGPPLGSHAWILIAIFQLAMDFIICES) form the signal peptide. Residues 38 to 262 (ESPGKAYKHL…NDTSGLAVHQ (225 aa)) lie on the Extracellular side of the membrane. The segment at 218-253 (LQNPGIHNGKKSPGRISTTDPNPGNGKTARPPRIPN) is disordered. Residues 263 to 283 (IITITVSLIMVIAALITTLVL) form a helical membrane-spanning segment. The interval 283-390 (LKNCCAQSGN…VSEKWFEISC (108 aa)) is targeting signals. The Cytoplasmic portion of the chain corresponds to 284 to 390 (KNCCAQSGNA…VSEKWFEISC (107 aa)).

The protein localises to the basolateral cell membrane. It localises to the apical cell membrane. The protein resides in the cell junction. It is found in the adherens junction. May play a role in cell adhesion and cell migration. This chain is Adherens junction-associated protein 1 (ajap1), found in Xenopus tropicalis (Western clawed frog).